Here is a 128-residue protein sequence, read N- to C-terminus: Small ribosomal subunit protein bS6 (128 aa).

This sequence belongs to the bacterial ribosomal protein bS6 family.

Binds together with bS18 to 16S ribosomal RNA. The protein is Small ribosomal subunit protein bS6 of Nitratiruptor sp. (strain SB155-2).